Reading from the N-terminus, the 1273-residue chain is Kinesin-like protein KIN-7O (1273 aa).

In terms of domain architecture, Kinesin motor spans 3 to 327 (RIHVSVRARP…LQFASRALRV (325 aa)). Residue 79-86 (GQTNSGKT) participates in ATP binding. A coiled-coil region spans residues 333 to 408 (VNEILTDAAL…QRERVLQEQA (76 aa)). A disordered region spans residues 452–474 (SEDQSNVLSRGSSLESARSERET). The span at 453–467 (EDQSNVLSRGSSLES) shows a compositional bias: polar residues. 2 coiled-coil regions span residues 602–674 (EAIL…ESEV) and 751–1023 (VQSS…MEEE).

This sequence belongs to the TRAFAC class myosin-kinesin ATPase superfamily. Kinesin family. KIN-7 subfamily.

The sequence is that of Kinesin-like protein KIN-7O from Arabidopsis thaliana (Mouse-ear cress).